The sequence spans 243 residues: Probable transcriptional regulatory protein BRE_29 (243 aa).

Belongs to the TACO1 family.

It is found in the cytoplasm. The chain is Probable transcriptional regulatory protein BRE_29 from Borrelia recurrentis (strain A1).